A 259-amino-acid chain; its full sequence is MLRSVWVYSLGLAVLLQQSGREQCWEHSQCRDLSSEENILECIQACNSDLTAESPIFPGNGHLQPPSEADRNYAKSHFRSTALGRRTNGSVGSSKQAGENAALSILFAALAPPQAEEEMEESESSQQQRREDKRSYSMEHFRWGKPVGRKRRPVKVYPNGVEEESAEAYPTEMRRDLMSDLDYPLLEEVEEELGGENEVLNLQEKKDGSYKMHHFRWSRPPKDKRYGGFMKSWDERSQKPLLTLFKNVIIKDGHQKKGQ.

A signal peptide spans 1-22; it reads MLRSVWVYSLGLAVLLQQSGRE. Gln-23 carries the post-translational modification Pyrrolidone carboxylic acid. 2 cysteine pairs are disulfide-bonded: Cys-24-Cys-46 and Cys-30-Cys-42. The interval 113 to 142 is disordered; the sequence is PQAEEEMEESESSQQQRREDKRSYSMEHFR. Over residues 128-142 the composition is skewed to basic and acidic residues; the sequence is QRREDKRSYSMEHFR. Position 147 is a valine amide (Val-147).

Belongs to the POMC family. Post-translationally, specific enzymatic cleavages at paired basic residues yield the different active peptides.

The protein localises to the secreted. Functionally, stimulates the adrenal glands to release cortisol. Anorexigenic peptide. Increases the pigmentation of skin by increasing melanin production in melanocytes. Its function is as follows. Increases the pigmentation of skin by increasing melanin production in melanocytes. In terms of biological role, endogenous orexigenic opiate. Functionally, endogenous opiate. The chain is Pro-opiomelanocortin (pomc) from Lepisosteus osseus (Long-nosed gar).